The sequence spans 299 residues: Hairy/enhancer-of-split related with YRPW motif protein 1 (299 aa).

Positions 1–53 (MKRAHPDYSSSDSELDETIEVEKESADENGNLSSALCSMSPTTSSQVLARKRR) are disordered. Positions 28-47 (ENGNLSSALCSMSPTTSSQV) are enriched in polar residues. Residues 48-117 (LARKRRRGII…GGKGYFDAHA (70 aa)) are transcriptional repression and interaction with NCOR1 and SIN3A. A bHLH domain is found at 49–104 (ARKRRRGIIEKRRRDRINNSLSELRRLVPSAFEKQGSAKLEKAEILQMTVDHLKML). The 37-residue stretch at 122–158 (YRSLGFRECLAEVARYLSIIEGLDASDPLLVRLVSHL) folds into the Orange domain. The segment at 194-234 (LLLPQNGHGNAGTAASPTEPHHQGRLASAHPEAPALRAPPS) is disordered. Positions 289–292 (YRPW) match the YRPW motif motif.

The protein belongs to the HEY family. In terms of assembly, may self-associate. Interacts with HES1, NCOR1 and SIN3A. Interacts with GATA4, GATA6 and HDAC1 and HEYL. Interacts with CCDC89/BOIP. As to expression, expressed in somitic mesoderm, brain, central nervous system, kidney, heart, nasal epithelium, limbs, lung, muscle, ovary and testis.

It is found in the nucleus. Transcriptional repressor which binds preferentially to the canonical E box sequence 5'-CACGTG-3'. Downstream effector of Notch signaling required for cardiovascular development. Specifically required for the Notch-induced endocardial epithelial to mesenchymal transition, which is itself criticial for cardiac valve and septum development. May be required in conjunction with HEY2 to specify arterial cell fate or identity. Promotes maintenance of neuronal precursor cells and glial versus neuronal fate specification. Represses transcription by the cardiac transcriptional activators GATA4 and GATA6 and by the neuronal bHLH factors ASCL1/MASH1 and NEUROD4/MATH3. This Mus musculus (Mouse) protein is Hairy/enhancer-of-split related with YRPW motif protein 1 (Hey1).